Consider the following 112-residue polypeptide: MSFGAAGGSLPMTTREPPERGSFPLDHFGECTHVMKQYLECIKVKRENQEECRLLAKKYLQCRMDTGLFGKDDMKNLGFHGDENATSTSLSSSNDGNNNSNSSSSDNKTGGE.

A mitochondrion-targeting transit peptide spans 1-16 (MSFGAAGGSLPMTTRE). Residues 1–24 (MSFGAAGGSLPMTTREPPERGSFP) are disordered. The 43-residue stretch at 28–70 (FGECTHVMKQYLECIKVKRENQEECRLLAKKYLQCRMDTGLFG) folds into the CHCH domain. 2 consecutive short sequence motifs (cx9C motif) follow at residues 31–41 (CTHVMKQYLEC) and 52–62 (CRLLAKKYLQC). 2 disulfides stabilise this stretch: C31–C62 and C41–C52. Residues 73–83 (DMKNLGFHGDE) are compositionally biased toward basic and acidic residues. The segment at 73–112 (DMKNLGFHGDENATSTSLSSSNDGNNNSNSSSSDNKTGGE) is disordered. A compositionally biased stretch (low complexity) spans 84–112 (NATSTSLSSSNDGNNNSNSSSSDNKTGGE).

This sequence belongs to the COX19 family.

The protein localises to the cytoplasm. It is found in the mitochondrion intermembrane space. Its function is as follows. Required for the assembly of mitochondrial cytochrome c oxidase. The sequence is that of Cytochrome c oxidase assembly protein cox19, mitochondrial (cox19) from Schizosaccharomyces pombe (strain 972 / ATCC 24843) (Fission yeast).